The chain runs to 270 residues: tRNA pseudouridine synthase A (270 aa).

The Nucleophile role is filled by aspartate 60. The interval 107-111 is RNA binding; sequence FHARF. Tyrosine 118 lines the substrate pocket. Residues 168 to 172 form an interaction with tRNA region; that stretch reads QCQSR.

This sequence belongs to the tRNA pseudouridine synthase TruA family. As to quaternary structure, homodimer.

The catalysed reaction is uridine(38/39/40) in tRNA = pseudouridine(38/39/40) in tRNA. Formation of pseudouridine at positions 38, 39 and 40 in the anticodon stem and loop of transfer RNAs. This chain is tRNA pseudouridine synthase A, found in Escherichia coli (strain K12 / DH10B).